A 462-amino-acid polypeptide reads, in one-letter code: L-seryl-tRNA(Sec) selenium transferase (462 aa).

Position 295 is an N6-(pyridoxal phosphate)lysine (lysine 295).

This sequence belongs to the SelA family. As to quaternary structure, homodecamer; pentamer of dimers. Binds only one seryl-tRNA(Sec) per dimer. It depends on pyridoxal 5'-phosphate as a cofactor.

Its subcellular location is the cytoplasm. The enzyme catalyses L-seryl-tRNA(Sec) + selenophosphate + H(+) = L-selenocysteinyl-tRNA(Sec) + phosphate. It functions in the pathway aminoacyl-tRNA biosynthesis; selenocysteinyl-tRNA(Sec) biosynthesis; selenocysteinyl-tRNA(Sec) from L-seryl-tRNA(Sec) (bacterial route): step 1/1. Functionally, converts seryl-tRNA(Sec) to selenocysteinyl-tRNA(Sec) required for selenoprotein biosynthesis. This Klebsiella pneumoniae (strain 342) protein is L-seryl-tRNA(Sec) selenium transferase.